The primary structure comprises 338 residues: S-adenosylmethionine:tRNA ribosyltransferase-isomerase (338 aa).

This sequence belongs to the QueA family. As to quaternary structure, monomer.

The protein localises to the cytoplasm. The enzyme catalyses 7-aminomethyl-7-carbaguanosine(34) in tRNA + S-adenosyl-L-methionine = epoxyqueuosine(34) in tRNA + adenine + L-methionine + 2 H(+). The protein operates within tRNA modification; tRNA-queuosine biosynthesis. Transfers and isomerizes the ribose moiety from AdoMet to the 7-aminomethyl group of 7-deazaguanine (preQ1-tRNA) to give epoxyqueuosine (oQ-tRNA). In Francisella tularensis subsp. tularensis (strain WY96-3418), this protein is S-adenosylmethionine:tRNA ribosyltransferase-isomerase.